Reading from the N-terminus, the 459-residue chain is uncharacterized protein (459 aa).

The protein belongs to the Rab GDI family.

Its subcellular location is the cytoplasm. It is found in the nucleus. This is an uncharacterized protein from Schizosaccharomyces pombe (strain 972 / ATCC 24843) (Fission yeast).